Reading from the N-terminus, the 150-residue chain is Large ribosomal subunit protein bL9 (150 aa).

It belongs to the bacterial ribosomal protein bL9 family.

Functionally, binds to the 23S rRNA. In Vibrio parahaemolyticus serotype O3:K6 (strain RIMD 2210633), this protein is Large ribosomal subunit protein bL9.